Consider the following 465-residue polypeptide: ATP-dependent rRNA helicase rrp3 (465 aa).

Residues 1–22 are compositionally biased toward basic and acidic residues; the sequence is MAPSEKKLTEDKKNSSLNKKIE. The tract at residues 1 to 44 is disordered; it reads MAPSEKKLTEDKKNSSLNKKIETSNSSSEKSSENNNGDSQNNEA. Low complexity predominate over residues 23-36; it reads TSNSSSEKSSENNN. The Q motif signature appears at 46-74; it reads KTFKELGVIDELCEACEKLGFKTPTPIQQ. The Helicase ATP-binding domain maps to 77 to 248; it reads IPVVLNKRDV…RASLHQPVRV (172 aa). Residue 90–97 coordinates ATP; the sequence is AQTGSGKT. The short motif at 196–199 is the DEAD box element; that stretch reads DEAD. The region spanning 275–419 is the Helicase C-terminal domain; sequence YLVYLVNELA…EYEIDKEGVF (145 aa). The segment covering 442–453 has biased composition (basic residues); that stretch reads RRKSKGKLHTKR. The tract at residues 442–465 is disordered; that stretch reads RRKSKGKLHTKRKRDDLDREEQIY. The segment covering 454–465 has biased composition (basic and acidic residues); that stretch reads KRDDLDREEQIY.

Belongs to the DEAD box helicase family. DDX47/RRP3 subfamily. Interacts with the SSU processome.

The protein resides in the nucleus. It catalyses the reaction ATP + H2O = ADP + phosphate + H(+). Its function is as follows. ATP-dependent rRNA helicase required for pre-ribosomal RNA processing. Involved in the maturation of the 35S-pre-rRNA and to its cleavage to mature 18S rRNA. In Schizosaccharomyces pombe (strain 972 / ATCC 24843) (Fission yeast), this protein is ATP-dependent rRNA helicase rrp3.